A 271-amino-acid polypeptide reads, in one-letter code: Interleukin-1 alpha (271 aa).

Residues 1 to 112 (MAKVPDMFED…DSEEEIIKPR (112 aa)) constitute a propeptide that is removed on maturation. Lys82 bears the N6-acetyllysine mark. The nuclear localization signal (NLS) stretch occupies residues 82–86 (KKRRL). Ser87 bears the Phosphoserine mark. N-linked (GlcNAc...) asparagine glycosylation is found at Asn102, Asn121, Asn137, and Asn141.

It belongs to the IL-1 family. In terms of assembly, monomer. Interacts with TMED10; the interaction mediates the translocation from the cytoplasm into the ERGIC (endoplasmic reticulum-Golgi intermediate compartment) and thereby secretion. Interacts with IL1R1. Interacts with S100A13; this interaction is the first step in the export of IL1A, followed by direct translocation of this complex across the plasma membrane. Post-translationally, acetylated within its nuclear localization sequence, which impacts subcellular localization. Proteolytic processed by CAPN1 in a calcium-dependent manner. Cleavage from 31 kDa precursor to 18 kDa biologically active molecules. In terms of processing, phosphorylated. Phosphorylation greatly enhances susceptibility to digestion and promotes the conversion of pre-IL1A alpha to the biologically active IL1A.

Its subcellular location is the nucleus. It localises to the cytoplasm. The protein localises to the secreted. In terms of biological role, cytokine constitutively present intracellularly in nearly all resting non-hematopoietic cells that plays an important role in inflammation and bridges the innate and adaptive immune systems. After binding to its receptor IL1R1 together with its accessory protein IL1RAP, forms the high affinity interleukin-1 receptor complex. Signaling involves the recruitment of adapter molecules such as MYD88, IRAK1 or IRAK4. In turn, mediates the activation of NF-kappa-B and the three MAPK pathways p38, p42/p44 and JNK pathways. Within the cell, acts as an alarmin and cell death results in its liberation in the extracellular space after disruption of the cell membrane to induce inflammation and alert the host to injury or damage. In addition to its role as a danger signal, which occurs when the cytokine is passively released by cell necrosis, directly senses DNA damage and acts as signal for genotoxic stress without loss of cell integrity. This Macaca fascicularis (Crab-eating macaque) protein is Interleukin-1 alpha (IL1A).